The chain runs to 247 residues: Acetoacetate decarboxylase 1 (247 aa).

Lys-116 functions as the Schiff-base intermediate with acetoacetate in the catalytic mechanism.

Belongs to the ADC family.

The enzyme catalyses acetoacetate + H(+) = acetone + CO2. In terms of biological role, catalyzes the conversion of acetoacetate to acetone and carbon dioxide. This Mesorhizobium japonicum (strain LMG 29417 / CECT 9101 / MAFF 303099) (Mesorhizobium loti (strain MAFF 303099)) protein is Acetoacetate decarboxylase 1.